A 224-amino-acid chain; its full sequence is Biosynthetic peptidoglycan transglycosylase (224 aa).

The helical transmembrane segment at 12–32 (ILVVLAILPVFLLLVYSLPFV) threads the bilayer.

Belongs to the glycosyltransferase 51 family.

It is found in the cell inner membrane. The enzyme catalyses [GlcNAc-(1-&gt;4)-Mur2Ac(oyl-L-Ala-gamma-D-Glu-L-Lys-D-Ala-D-Ala)](n)-di-trans,octa-cis-undecaprenyl diphosphate + beta-D-GlcNAc-(1-&gt;4)-Mur2Ac(oyl-L-Ala-gamma-D-Glu-L-Lys-D-Ala-D-Ala)-di-trans,octa-cis-undecaprenyl diphosphate = [GlcNAc-(1-&gt;4)-Mur2Ac(oyl-L-Ala-gamma-D-Glu-L-Lys-D-Ala-D-Ala)](n+1)-di-trans,octa-cis-undecaprenyl diphosphate + di-trans,octa-cis-undecaprenyl diphosphate + H(+). The protein operates within cell wall biogenesis; peptidoglycan biosynthesis. Peptidoglycan polymerase that catalyzes glycan chain elongation from lipid-linked precursors. The polypeptide is Biosynthetic peptidoglycan transglycosylase (Brucella melitensis biotype 1 (strain ATCC 23456 / CCUG 17765 / NCTC 10094 / 16M)).